The chain runs to 420 residues: Amino acid decarboxylase lolD1 (420 aa).

Position 62 is an N6-(pyridoxal phosphate)lysine (K62). Pyridoxal 5'-phosphate-binding positions include S194, G231, and 266–269 (EPGT). 315–316 (IV) contributes to the substrate binding site. The active-site Proton donor; shared with dimeric partner is the C351. C351 is subject to S-nitrosocysteine. A substrate-binding site is contributed by D352. Y381 is a binding site for pyridoxal 5'-phosphate.

It belongs to the Orn/Lys/Arg decarboxylase class-II family. In terms of assembly, homodimer. It depends on pyridoxal 5'-phosphate as a cofactor.

It participates in alkaloid biosynthesis. Amino acid decarboxylase; part of the gene cluster that mediates the biosynthesis of loline alkaloids, potent insecticidal agents composed of a pyrrolizidine ring system and an uncommon ether bridge linking carbons 2 and 7. Lolines are structurally differentiated by the various modifications of the L-amino group and include norloline, loline, N-methylloline, N-acetylloline, N-acetylnorloline, and N-formylloline. The first committed step is the condensation of O-acetyl-L-homoserine (derived from L-aspartic acid) and L-proline, probably catalyzed by the gamma-type pyridoxal 5'-phosphate(PLP)-dependent enzyme lolC, to give the diamino diacid, NACPP. Ensuing cyclization, decarboxylation, and acetylation steps yield 1-exo-acetamidopyrrolizidine (AcAP). LolO is required for installation of the ether bridge upon the pathway intermediate, 1-exo-acetamidopyrrolizidine (AcAP). In sequential 2-oxoglutarate- and O(2)-consuming steps, lolO removes hydrogens from C2 and C7 of AcAP to form both carbon-oxygen bonds in N-acetylnorloline (NANL), the precursor to all other lolines. The enzymes lolD, lolE, lolF and lolT have also been proposed to be involved in the ether-bridge installation. Further processing of the exocyclic moiety of NANL by fungal N-acetamidase (LolN), methyltransferase (LolM), and cytochrome P450 (LolP) enzymes, with occasional involvement of a plant acetyltransferase, generates the other known lolines. LolN transforms NANL to norlonine which is monomethylated and dimethylated to respectively lonine and N-methyllonine (NML) by lolM. LolP catalyzes hydroxylation of the methyl group in N-methylloline (NML) and further oxygenation to N-formylloline (NFL). A plant acetyltransferase is responsible for the acetylation of loline to form N-acetylloline (NAL). LolA might interact with aspartate kinase to prevent feedback inhibition of its activity by these end products and thereby promote production of L-homoserine from L-aspartate. In Epichloe uncinata (Endophyte fungus), this protein is Amino acid decarboxylase lolD1.